The following is a 110-amino-acid chain: Large ribosomal subunit protein P2B (110 aa).

Serine 29 is subject to Phosphoserine. Residue lysine 49 forms a Glycyl lysine isopeptide (Lys-Gly) (interchain with G-Cter in ubiquitin) linkage. A disordered region spans residues 66 to 110; that stretch reads VPTGGASSAAAGAAGAAAGGDAAEEEKEEEAKEESDDDMGFGLFD. Residues 69-86 show a composition bias toward low complexity; the sequence is GGASSAAAGAAGAAAGGD. The span at 87–104 shows a compositional bias: acidic residues; it reads AAEEEKEEEAKEESDDDM. Serine 100 carries the phosphoserine modification.

The protein belongs to the eukaryotic ribosomal protein P1/P2 family. Component of the large ribosomal subunit (LSU). Mature yeast ribosomes consist of a small (40S) and a large (60S) subunit. The 40S small subunit contains 1 molecule of ribosomal RNA (18S rRNA) and 33 different proteins (encoded by 57 genes). The large 60S subunit contains 3 rRNA molecules (25S, 5.8S and 5S rRNA) and 46 different proteins (encoded by 81 genes). The 5 acidic ribosomal P-proteins form the stalk structure of the 60S subunit. They are organized as a pentameric complex in which uL10/P0 interacts with 2 heterodimers, P1A-P2B and P1B-P2A. The N-terminus is not modified.

The protein localises to the cytoplasm. Functionally, component of the ribosome, a large ribonucleoprotein complex responsible for the synthesis of proteins in the cell. The small ribosomal subunit (SSU) binds messenger RNAs (mRNAs) and translates the encoded message by selecting cognate aminoacyl-transfer RNA (tRNA) molecules. The large subunit (LSU) contains the ribosomal catalytic site termed the peptidyl transferase center (PTC), which catalyzes the formation of peptide bonds, thereby polymerizing the amino acids delivered by tRNAs into a polypeptide chain. The nascent polypeptides leave the ribosome through a tunnel in the LSU and interact with protein factors that function in enzymatic processing, targeting, and the membrane insertion of nascent chains at the exit of the ribosomal tunnel. In Saccharomyces cerevisiae (strain ATCC 204508 / S288c) (Baker's yeast), this protein is Large ribosomal subunit protein P2B.